Consider the following 289-residue polypeptide: Mas-related G-protein coupled receptor member G (289 aa).

At 1 to 13 (MFGLFGLWRTFDS) the chain is on the extracellular side. Residues 14–34 (VVFYLTLIVGLGGPVGNGLVL) form a helical membrane-spanning segment. Topologically, residues 35–42 (WNLGFRIK) are cytoplasmic. A helical transmembrane segment spans residues 43 to 63 (KGPFSIYLLHLAAADFLFLSC). Over 64–78 (RVGFSVAQAALGAQD) the chain is Extracellular. The chain crosses the membrane as a helical span at residues 79–99 (TLYFVLTFLWFAVGLWLLAAF). Over 100 to 120 (SVERCLSDLFPACYQGCRPRH) the chain is Cytoplasmic. The chain crosses the membrane as a helical span at residues 121–141 (ASAVLCALVWTPTLPAVPLPA). Topologically, residues 142–163 (NACGLLRNSACPLVCPRYHVAS) are extracellular. Residues 164–184 (VTWFLVLARVAWTAGVVLFVW) form a helical membrane-spanning segment. Over 185 to 195 (VTCCSTRPRPR) the chain is Cytoplasmic. The chain crosses the membrane as a helical span at residues 196–216 (LYGIVLGALLLLFFCGLPSVF). Residues 217 to 221 (YWSLQ) are Extracellular-facing. The helical transmembrane segment at 222–242 (PLLNFLLPVFSPLATLLACVN) threads the bilayer. Residues 243 to 289 (SSSKPLIYSGLGRQPGKREPLRSVLRRALGEGAELGARGQSLPMGLL) lie on the Cytoplasmic side of the membrane.

It belongs to the G-protein coupled receptor 1 family. Mas subfamily.

It is found in the cell membrane. Functionally, orphan receptor. May regulate nociceptor function and/or development, including the sensation or modulation of pain. In Homo sapiens (Human), this protein is Mas-related G-protein coupled receptor member G (MRGPRG).